Consider the following 380-residue polypeptide: Probable G-protein coupled receptor 132 (380 aa).

The Extracellular portion of the chain corresponds to 1-45 (MCPMLLKNGYNGNATPVTTTAPWASLGLSAKTCNNVSFEESRIVL). N-linked (GlcNAc...) asparagine glycosylation is present at Asn35. A helical membrane pass occupies residues 46–68 (VVVYSAVCTLGVPANCLTAWLAL). Residues 69–79 (LQVLQGNVLAV) lie on the Cytoplasmic side of the membrane. A helical transmembrane segment spans residues 80–102 (YLLCLALCELLYTGTLPLWVIYI). The Extracellular segment spans residues 103–116 (RNQHRWTLGLLACK). Residues Cys115 and Cys186 are joined by a disulfide bond. Residues 117 to 138 (VTAYIFFCNIYVSILFLCCISC) form a helical membrane-spanning segment. Topologically, residues 139 to 158 (DRFVAVVYALESRGRRRRRT) are cytoplasmic. A helical transmembrane segment spans residues 159-178 (AILISACIFILVGIVHYPVF). The Extracellular segment spans residues 179–197 (QTEDKETCFDMLQMDSRIA). A helical transmembrane segment spans residues 198 to 220 (GYYYARFTVGFAIPLSIIAFTNH). Residues 221-246 (RIFRSIKQSMGLSAAQKAKVKHSAIA) lie on the Cytoplasmic side of the membrane. Residues 247-269 (VVVIFLVCFAPYHLVLLVKAAAF) traverse the membrane as a helical segment. The Extracellular portion of the chain corresponds to 270 to 288 (SYYRGDRNAMCGLEERLYT). Residues 289–311 (ASVVFLCLSTVNGVADPIIYVLA) form a helical membrane-spanning segment. The Cytoplasmic portion of the chain corresponds to 312–380 (TDHSRQEVSR…PAKRLIEESC (69 aa)).

This sequence belongs to the G-protein coupled receptor 1 family. Highly expressed in macrophages and hematopoietic tissues rich in lymphocytes, like spleen and thymus. Weakly expressed in heart and lung. In atherosclerotic plaques, expression is observed around the lipid core and at the shoulder region.

It is found in the cell membrane. May be a receptor for oxidized free fatty acids derived from linoleic and arachidonic acids such as 9-hydroxyoctadecadienoic acid (9-HODE). Activates a G alpha protein, most likely G alpha(q). May be involved in apoptosis. Functions at the G2/M checkpoint to delay mitosis. May function as a sensor that monitors the oxidative states and mediates appropriate cellular responses such as secretion of paracrine signals and attenuation of proliferation. May mediate ths accumulation of intracellular inositol phosphates at acidic pH through proton-sensing activity. The sequence is that of Probable G-protein coupled receptor 132 (GPR132) from Homo sapiens (Human).